The sequence spans 150 residues: Protein ADM2 (150 aa).

The signal sequence occupies residues 1–25 (MAQLLMVTVTLGCISLLYLLPGTLS). The propeptide occupies 26-100 (GSLGKGLRHS…HPGPQRPTGS (75 aa)). The tract at residues 28 to 102 (LGKGLRHSRP…GPQRPTGSRR (75 aa)) is disordered. Cys112 and Cys117 are oxidised to a cystine. Tyr149 is subject to Tyrosine amide.

It belongs to the adrenomedullin family. As to expression, high expression detected in the submaxillary gland, kidney, stomach, and mesentery, followed by the pituitary, lung, pancreas, intestines, spleen, thymus and ovary. Expressed mainly in the intermediate lobe of the pituitary, with sporadic in the anterior lobe.

Its subcellular location is the secreted. Functionally, intermedin/ADM2 is a peptide hormone that plays a role as physiological regulator of gastrointestinal and cardiovascular bioactivities mediated by the CALCRL-RAMPs receptor complexes. Activates the cAMP-dependent pathway through interaction with CALCRL-RAMP3 receptor complex. In Mus musculus (Mouse), this protein is Protein ADM2.